A 256-amino-acid chain; its full sequence is Thiazole synthase (256 aa).

Lys-95 functions as the Schiff-base intermediate with DXP in the catalytic mechanism. 1-deoxy-D-xylulose 5-phosphate-binding positions include Gly-156, 182–183 (AG), and 204–205 (NT).

It belongs to the ThiG family. In terms of assembly, homotetramer. Forms heterodimers with either ThiH or ThiS.

It localises to the cytoplasm. It catalyses the reaction [ThiS sulfur-carrier protein]-C-terminal-Gly-aminoethanethioate + 2-iminoacetate + 1-deoxy-D-xylulose 5-phosphate = [ThiS sulfur-carrier protein]-C-terminal Gly-Gly + 2-[(2R,5Z)-2-carboxy-4-methylthiazol-5(2H)-ylidene]ethyl phosphate + 2 H2O + H(+). It participates in cofactor biosynthesis; thiamine diphosphate biosynthesis. Its function is as follows. Catalyzes the rearrangement of 1-deoxy-D-xylulose 5-phosphate (DXP) to produce the thiazole phosphate moiety of thiamine. Sulfur is provided by the thiocarboxylate moiety of the carrier protein ThiS. In vitro, sulfur can be provided by H(2)S. This chain is Thiazole synthase, found in Salmonella paratyphi B (strain ATCC BAA-1250 / SPB7).